The primary structure comprises 606 residues: Aspartate--tRNA(Asp/Asn) ligase (606 aa).

An L-aspartate-binding site is contributed by Glu175. The interval 199-202 (QLFK) is aspartate. An L-aspartate-binding site is contributed by Arg221. Residues 221–223 (RDE) and Gln230 each bind ATP. Residue His453 coordinates L-aspartate. Glu487 is an ATP binding site. Arg494 provides a ligand contact to L-aspartate. ATP is bound at residue 539 to 542 (GWDR). Positions 564 to 606 (GGVDPLTDAPGTIPAEQRKETGVDFKPEKAAKAAQGEKAGKES) are disordered. Positions 579–594 (EQRKETGVDFKPEKAA) are enriched in basic and acidic residues.

The protein belongs to the class-II aminoacyl-tRNA synthetase family. Type 1 subfamily. Homodimer.

It localises to the cytoplasm. The catalysed reaction is tRNA(Asx) + L-aspartate + ATP = L-aspartyl-tRNA(Asx) + AMP + diphosphate. Functionally, aspartyl-tRNA synthetase with relaxed tRNA specificity since it is able to aspartylate not only its cognate tRNA(Asp) but also tRNA(Asn). Reaction proceeds in two steps: L-aspartate is first activated by ATP to form Asp-AMP and then transferred to the acceptor end of tRNA(Asp/Asn). This Corynebacterium aurimucosum (strain ATCC 700975 / DSM 44827 / CIP 107346 / CN-1) (Corynebacterium nigricans) protein is Aspartate--tRNA(Asp/Asn) ligase.